The following is a 346-amino-acid chain: uncharacterized protein (346 aa).

The next 8 helical transmembrane spans lie at 15-35, 55-75, 93-113, 139-159, 182-202, 229-249, 269-289, and 295-315; these read YLRGFALLGIILVNILGLLTV, VEARFYPIFSFLFGVGFYLFI, ILVLFIFGFIHFLFQPGEALT, ILLLFVSIFAAKIFMPLPLIL, IFTFFMFILSVGGLLLQYCYV, LGVATGPILSAFYAGFLLLLL, LTNYISQTALILLAGKLFHLF, and LQSLWLCLAIYVIQLIFSAMW.

This sequence to E.coli YeiB, B.subtilis YxaH and B.subtilis YrkO.

It localises to the cell membrane. Its function is as follows. Involved in transport. This is an uncharacterized protein from Bacillus acidopullulyticus.